Consider the following 427-residue polypeptide: Glutamate-1-semialdehyde 2,1-aminomutase (427 aa).

The residue at position 265 (K265) is an N6-(pyridoxal phosphate)lysine.

This sequence belongs to the class-III pyridoxal-phosphate-dependent aminotransferase family. HemL subfamily. Homodimer. Pyridoxal 5'-phosphate serves as cofactor.

It is found in the cytoplasm. It catalyses the reaction (S)-4-amino-5-oxopentanoate = 5-aminolevulinate. It participates in porphyrin-containing compound metabolism; protoporphyrin-IX biosynthesis; 5-aminolevulinate from L-glutamyl-tRNA(Glu): step 2/2. This Actinobacillus succinogenes (strain ATCC 55618 / DSM 22257 / CCUG 43843 / 130Z) protein is Glutamate-1-semialdehyde 2,1-aminomutase.